A 118-amino-acid chain; its full sequence is Large ribosomal subunit protein uL22 (118 aa).

This sequence belongs to the universal ribosomal protein uL22 family. In terms of assembly, part of the 50S ribosomal subunit.

In terms of biological role, this protein binds specifically to 23S rRNA; its binding is stimulated by other ribosomal proteins, e.g. L4, L17, and L20. It is important during the early stages of 50S assembly. It makes multiple contacts with different domains of the 23S rRNA in the assembled 50S subunit and ribosome. Functionally, the globular domain of the protein is located near the polypeptide exit tunnel on the outside of the subunit, while an extended beta-hairpin is found that lines the wall of the exit tunnel in the center of the 70S ribosome. In Treponema denticola (strain ATCC 35405 / DSM 14222 / CIP 103919 / JCM 8153 / KCTC 15104), this protein is Large ribosomal subunit protein uL22.